The chain runs to 445 residues: Phosphoglucosamine mutase (445 aa).

The Phosphoserine intermediate role is filled by Ser-102. Positions 102, 241, 243, and 245 each coordinate Mg(2+). Ser-102 carries the post-translational modification Phosphoserine.

This sequence belongs to the phosphohexose mutase family. It depends on Mg(2+) as a cofactor. Activated by phosphorylation.

It carries out the reaction alpha-D-glucosamine 1-phosphate = D-glucosamine 6-phosphate. In terms of biological role, catalyzes the conversion of glucosamine-6-phosphate to glucosamine-1-phosphate. The sequence is that of Phosphoglucosamine mutase from Shigella dysenteriae serotype 1 (strain Sd197).